The following is a 460-amino-acid chain: ATP synthase subunit beta (460 aa).

150 to 157 (GGAGVGKT) lines the ATP pocket.

This sequence belongs to the ATPase alpha/beta chains family. F-type ATPases have 2 components, CF(1) - the catalytic core - and CF(0) - the membrane proton channel. CF(1) has five subunits: alpha(3), beta(3), gamma(1), delta(1), epsilon(1). CF(0) has three main subunits: a(1), b(2) and c(9-12). The alpha and beta chains form an alternating ring which encloses part of the gamma chain. CF(1) is attached to CF(0) by a central stalk formed by the gamma and epsilon chains, while a peripheral stalk is formed by the delta and b chains.

It is found in the cell inner membrane. The catalysed reaction is ATP + H2O + 4 H(+)(in) = ADP + phosphate + 5 H(+)(out). Produces ATP from ADP in the presence of a proton gradient across the membrane. The catalytic sites are hosted primarily by the beta subunits. This is ATP synthase subunit beta from Klebsiella pneumoniae subsp. pneumoniae (strain ATCC 700721 / MGH 78578).